A 271-amino-acid chain; its full sequence is Putative phosphoenolpyruvate synthase regulatory protein (271 aa).

151–158 (GVSRSGKT) provides a ligand contact to ADP.

The protein belongs to the pyruvate, phosphate/water dikinase regulatory protein family. PSRP subfamily.

The catalysed reaction is [pyruvate, water dikinase] + ADP = [pyruvate, water dikinase]-phosphate + AMP + H(+). The enzyme catalyses [pyruvate, water dikinase]-phosphate + phosphate + H(+) = [pyruvate, water dikinase] + diphosphate. In terms of biological role, bifunctional serine/threonine kinase and phosphorylase involved in the regulation of the phosphoenolpyruvate synthase (PEPS) by catalyzing its phosphorylation/dephosphorylation. The chain is Putative phosphoenolpyruvate synthase regulatory protein from Burkholderia multivorans (strain ATCC 17616 / 249).